Consider the following 120-residue polypeptide: uncharacterized protein (120 aa).

Positions 7 to 120 constitute an HIT domain; the sequence is VFAKIITKNL…KLIGLINNND (114 aa). A Histidine triad motif motif is present at residues 101 to 105; sequence HFHFH.

This is an uncharacterized protein from Rickettsia prowazekii (strain Madrid E).